A 202-amino-acid chain; its full sequence is UPF0301 protein mlr7511 (202 aa).

This sequence belongs to the UPF0301 (AlgH) family.

The chain is UPF0301 protein mlr7511 from Mesorhizobium japonicum (strain LMG 29417 / CECT 9101 / MAFF 303099) (Mesorhizobium loti (strain MAFF 303099)).